Here is a 397-residue protein sequence, read N- to C-terminus: DnaJ homolog subfamily A member 1 (397 aa).

One can recognise a J domain in the interval 6–68 (TYYDVLGVKP…KKRELYDKGG (63 aa)). Position 66 is an N6-acetyllysine (Lys66). The residue at position 83 (Ser83) is a Phosphoserine. A CR-type zinc finger spans residues 121 to 205 (GATRKLALQK…CNGRKIVREK (85 aa)). The Zn(2+) site is built by Cys134, Cys137, Cys150, Cys153, Cys177, Cys180, Cys193, and Cys196. CXXCXGXG motif repeat units lie at residues 134 to 141 (CDKCEGRG), 150 to 157 (CPNCRGTG), 177 to 184 (CMECQGHG), and 193 to 200 (CKSCNGRK). Ser335 is subject to Phosphoserine. Residues 352-397 (VEETDEMDQVELVDFDPNQERRRHYNGEAYEDDEHHPRGGVQCQTS) form a disordered region. The segment covering 353–365 (EETDEMDQVELVD) has biased composition (acidic residues). Tyr381 carries the phosphotyrosine modification. Position 394 is a cysteine methyl ester (Cys394). Cys394 carries the S-farnesyl cysteine lipid modification. Positions 395 to 397 (QTS) are cleaved as a propeptide — removed in mature form.

In terms of assembly, identified in a complex with HSPA1B and BAX. Interacts with RNF207.

The protein localises to the membrane. Its subcellular location is the cytoplasm. It is found in the microsome. The protein resides in the mitochondrion. It localises to the nucleus. The protein localises to the perinuclear region. Co-chaperone for HSPA8/Hsc70. Plays a role in protein transport into mitochondria via its role as co-chaperone. Functions as co-chaperone for HSPA1B and negatively regulates the translocation of BAX from the cytosol to mitochondria in response to cellular stress, thereby protecting cells against apoptosis. Stimulates ATP hydrolysis, but not the folding of unfolded proteins mediated by HSPA1A (in vitro). Promotes apoptosis in response to cellular stress mediated by exposure to anisomycin or UV. The chain is DnaJ homolog subfamily A member 1 (DNAJA1) from Bos taurus (Bovine).